The sequence spans 226 residues: Ribose-5-phosphate isomerase A (226 aa).

Substrate is bound by residues 28-31 (TGST), 84-87 (DGAD), and 97-100 (KGLG). Glu-106 functions as the Proton acceptor in the catalytic mechanism. A substrate-binding site is contributed by Lys-124.

Belongs to the ribose 5-phosphate isomerase family. As to quaternary structure, homodimer.

The catalysed reaction is aldehydo-D-ribose 5-phosphate = D-ribulose 5-phosphate. It functions in the pathway carbohydrate degradation; pentose phosphate pathway; D-ribose 5-phosphate from D-ribulose 5-phosphate (non-oxidative stage): step 1/1. In terms of biological role, catalyzes the reversible conversion of ribose-5-phosphate to ribulose 5-phosphate. This chain is Ribose-5-phosphate isomerase A, found in Deinococcus radiodurans (strain ATCC 13939 / DSM 20539 / JCM 16871 / CCUG 27074 / LMG 4051 / NBRC 15346 / NCIMB 9279 / VKM B-1422 / R1).